A 314-amino-acid chain; its full sequence is Methionyl-tRNA formyltransferase (314 aa).

111–114 is a binding site for (6S)-5,6,7,8-tetrahydrofolate; the sequence is SLLP.

This sequence belongs to the Fmt family.

The catalysed reaction is L-methionyl-tRNA(fMet) + (6R)-10-formyltetrahydrofolate = N-formyl-L-methionyl-tRNA(fMet) + (6S)-5,6,7,8-tetrahydrofolate + H(+). In terms of biological role, attaches a formyl group to the free amino group of methionyl-tRNA(fMet). The formyl group appears to play a dual role in the initiator identity of N-formylmethionyl-tRNA by promoting its recognition by IF2 and preventing the misappropriation of this tRNA by the elongation apparatus. This is Methionyl-tRNA formyltransferase from Coxiella burnetii (strain CbuK_Q154) (Coxiella burnetii (strain Q154)).